The sequence spans 235 residues: Serine protease SplA (235 aa).

Residues 1 to 35 (MNKNVMVKGLTALDILTSLGCAENISDQPHSIAKA) form the signal peptide. Residues histidine 74, aspartate 113, and serine 189 each act as charge relay system in the active site.

It belongs to the peptidase S1B family.

The protein localises to the secreted. This Staphylococcus aureus protein is Serine protease SplA (splA).